Consider the following 265-residue polypeptide: Acyl-[acyl-carrier-protein]--UDP-N-acetylglucosamine O-acyltransferase (265 aa).

This sequence belongs to the transferase hexapeptide repeat family. LpxA subfamily. In terms of assembly, homotrimer.

The protein localises to the cytoplasm. It catalyses the reaction a (3R)-hydroxyacyl-[ACP] + UDP-N-acetyl-alpha-D-glucosamine = a UDP-3-O-[(3R)-3-hydroxyacyl]-N-acetyl-alpha-D-glucosamine + holo-[ACP]. Its pathway is glycolipid biosynthesis; lipid IV(A) biosynthesis; lipid IV(A) from (3R)-3-hydroxytetradecanoyl-[acyl-carrier-protein] and UDP-N-acetyl-alpha-D-glucosamine: step 1/6. In terms of biological role, involved in the biosynthesis of lipid A, a phosphorylated glycolipid that anchors the lipopolysaccharide to the outer membrane of the cell. This is Acyl-[acyl-carrier-protein]--UDP-N-acetylglucosamine O-acyltransferase from Polynucleobacter asymbioticus (strain DSM 18221 / CIP 109841 / QLW-P1DMWA-1) (Polynucleobacter necessarius subsp. asymbioticus).